Consider the following 289-residue polypeptide: ATP synthase gamma chain (289 aa).

This sequence belongs to the ATPase gamma chain family. As to quaternary structure, F-type ATPases have 2 components, CF(1) - the catalytic core - and CF(0) - the membrane proton channel. CF(1) has five subunits: alpha(3), beta(3), gamma(1), delta(1), epsilon(1). CF(0) has three main subunits: a, b and c.

The protein localises to the cell inner membrane. Its function is as follows. Produces ATP from ADP in the presence of a proton gradient across the membrane. The gamma chain is believed to be important in regulating ATPase activity and the flow of protons through the CF(0) complex. The polypeptide is ATP synthase gamma chain (Azorhizobium caulinodans (strain ATCC 43989 / DSM 5975 / JCM 20966 / LMG 6465 / NBRC 14845 / NCIMB 13405 / ORS 571)).